Reading from the N-terminus, the 700-residue chain is Centrosomal protein of 63 kDa (700 aa).

Residue Met1 is modified to N-acetylmethionine. 2 coiled-coil regions span residues 73–283 (KEVG…ETFI) and 343–533 (LQAE…MCKK). Phosphoserine occurs at positions 278, 488, and 492. The interval 570-603 (QYKTGHHSPRGQTLDSIDPVARGPSPLSSHISPG) is disordered. Positions 593 to 603 (PSPLSSHISPG) are enriched in low complexity.

This sequence belongs to the CEP63 family. As to quaternary structure, interacts with CEP152 and CDK1; these interactions recruit both ligands to centrosomes. Interacts with CDK2, CDK5RAP2, WDR62, CEP90, KIAA0753/moonraker and CCDC14. CEP63, CDK5RAP2, CEP152, WDR62 are proposed to form a stepwise assembled complex at the centrosome forming a ring near parental centrioles. Interacts with CCDC57; the interaction is required for their location to proximal end of centrioles. Interacts with FXR1; promoting its stabilization. Polyubiquitinated via 'Lys-48'-linked ubiquitin, leading to its degradation. Deubiquitinated by USP36, promoting its stabilization.

It localises to the cytoplasm. The protein localises to the cytoskeleton. It is found in the microtubule organizing center. Its subcellular location is the centrosome. The protein resides in the centriole. It localises to the centriolar satellite. Required for normal spindle assembly. Plays a key role in mother-centriole-dependent centriole duplication; the function also seems to involve CEP152, CDK5RAP2 and WDR62 through a stepwise assembled complex at the centrosome that recruits CDK2 required for centriole duplication. Reported to be required for centrosomal recruitment of CEP152; however, this function has been questioned. Also recruits CDK1 to centrosomes. Plays a role in DNA damage response. Following DNA damage, such as double-strand breaks (DSBs), is removed from centrosomes; this leads to the inactivation of spindle assembly and delay in mitotic progression. Promotes stabilization of FXR1 protein by inhibiting FXR1 ubiquitination. The sequence is that of Centrosomal protein of 63 kDa from Mus musculus (Mouse).